The chain runs to 146 residues: Histone H2A.1 (146 aa).

The disordered stretch occupies residues 118–146 (SPAAAEKEAKSPKKKTSTKSPKKKVAAKE). 2 short sequence motifs (SPKK motif) span residues 128-131 (SPKK) and 137-140 (SPKK). The span at 129 to 146 (PKKKTSTKSPKKKVAAKE) shows a compositional bias: basic residues.

The protein belongs to the histone H2A family. In terms of assembly, the nucleosome is a histone octamer containing two molecules each of H2A, H2B, H3 and H4 assembled in one H3-H4 heterotetramer and two H2A-H2B heterodimers. The octamer wraps approximately 147 bp of DNA. Phosphorylated within its C-terminal part, probably at the SPKK motifs. As to expression, expressed preferentially in meristematic tissues of young seedlings, in stigma and ovary but not in pollen.

It localises to the nucleus. The protein localises to the chromosome. Its function is as follows. Core component of nucleosome. Nucleosomes wrap and compact DNA into chromatin, limiting DNA accessibility to the cellular machineries which require DNA as a template. Histones thereby play a central role in transcription regulation, DNA repair, DNA replication and chromosomal stability. DNA accessibility is regulated via a complex set of post-translational modifications of histones, also called histone code, and nucleosome remodeling. This Triticum aestivum (Wheat) protein is Histone H2A.1 (H2A-9).